The primary structure comprises 92 residues: Putative regulatory protein CA_C1717 (92 aa).

Belongs to the RemA family.

The protein is Putative regulatory protein CA_C1717 of Clostridium acetobutylicum (strain ATCC 824 / DSM 792 / JCM 1419 / IAM 19013 / LMG 5710 / NBRC 13948 / NRRL B-527 / VKM B-1787 / 2291 / W).